The following is a 362-amino-acid chain: Molybdenum import ATP-binding protein ModC (362 aa).

The 236-residue stretch at 1–236 (MTASGLYLNL…TQSPTAQGED (236 aa)) folds into the ABC transporter domain. 36–43 (GPSGSGKT) lines the ATP pocket. The Mop domain occupies 297 to 362 (DSTILNKLAA…AQVKSVAIVG (66 aa)).

This sequence belongs to the ABC transporter superfamily. Molybdate importer (TC 3.A.1.8) family. In terms of assembly, the complex is composed of two ATP-binding proteins (ModC), two transmembrane proteins (ModB) and a solute-binding protein (ModA).

Its subcellular location is the cell inner membrane. It catalyses the reaction molybdate(out) + ATP + H2O = molybdate(in) + ADP + phosphate + H(+). Part of the ABC transporter complex ModABC involved in molybdenum import. Responsible for energy coupling to the transport system. The protein is Molybdenum import ATP-binding protein ModC of Saccharophagus degradans (strain 2-40 / ATCC 43961 / DSM 17024).